A 666-amino-acid polypeptide reads, in one-letter code: DNA ligase (666 aa).

NAD(+) contacts are provided by residues 31–35 (DYDFD), 80–81 (SL), and Glu111. Residue Lys113 is the N6-AMP-lysine intermediate of the active site. Residues Arg134, Glu170, Lys285, and Lys309 each contribute to the NAD(+) site. Cys403, Cys406, Cys421, and Cys427 together coordinate Zn(2+). A BRCT domain is found at 587–666 (VVSNKLLGKI…ESDFSALLTS (80 aa)).

The protein belongs to the NAD-dependent DNA ligase family. LigA subfamily. It depends on Mg(2+) as a cofactor. Requires Mn(2+) as cofactor.

The catalysed reaction is NAD(+) + (deoxyribonucleotide)n-3'-hydroxyl + 5'-phospho-(deoxyribonucleotide)m = (deoxyribonucleotide)n+m + AMP + beta-nicotinamide D-nucleotide.. Its function is as follows. DNA ligase that catalyzes the formation of phosphodiester linkages between 5'-phosphoryl and 3'-hydroxyl groups in double-stranded DNA using NAD as a coenzyme and as the energy source for the reaction. It is essential for DNA replication and repair of damaged DNA. The protein is DNA ligase of Flavobacterium psychrophilum (strain ATCC 49511 / DSM 21280 / CIP 103535 / JIP02/86).